The sequence spans 104 residues: MERLAFKMKLNKGQKQAYKERHDQLWPELKQLLKDNGVSEYSIFIDEETNTLFAFQKVSGHGGSQDLANNEIVKKWWDFMADIMQVNPDNSPVSIPLEEVFYME.

Substrate is bound at residue Tyr-18. The active-site Proton donor is His-22. Substrate contacts are provided by residues Tyr-41 and 76–77; that span reads WW.

This sequence belongs to the rhamnose mutarotase family. As to quaternary structure, homodimer.

The protein resides in the cytoplasm. The catalysed reaction is alpha-L-rhamnose = beta-L-rhamnose. It participates in carbohydrate metabolism; L-rhamnose metabolism. In terms of biological role, L-rhamnose mutarotase involved in ulvan degradation. Ulvan is the main polysaccharide component of the Ulvales (green seaweed) cell wall. It is composed of disaccharide building blocks comprising 3-sulfated rhamnose (Rha3S) linked to D-glucuronic acid (GlcA), L-iduronic acid (IduA), or D-xylose (Xyl). L-rhamnose mutarotase catalyzes the anomeric conversion of alpha- to beta-L-rhamnose. The sequence is that of L-rhamnose mutarotase (rhaM) from Formosa agariphila (strain DSM 15362 / KCTC 12365 / LMG 23005 / KMM 3901 / M-2Alg 35-1).